We begin with the raw amino-acid sequence, 202 residues long: Small ribosomal subunit protein uS4c (202 aa).

The 64-residue stretch at 89 to 152 (MRLDNIIFRL…QSNTFINNCI (64 aa)) folds into the S4 RNA-binding domain.

The protein belongs to the universal ribosomal protein uS4 family. In terms of assembly, part of the 30S ribosomal subunit. Contacts protein S5. The interaction surface between S4 and S5 is involved in control of translational fidelity.

Its subcellular location is the plastid. In terms of biological role, one of the primary rRNA binding proteins, it binds directly to 16S rRNA where it nucleates assembly of the body of the 30S subunit. Its function is as follows. With S5 and S12 plays an important role in translational accuracy. This chain is Small ribosomal subunit protein uS4c (rps4), found in Epifagus virginiana (Beechdrops).